The following is a 529-amino-acid chain: MGACAMNPQALKGSAMLAAAMLLASGAAMADVAPQAKAPTIAKELQQAKTYTISSPPTAPLEMAKPALPALSGYTDAAMEKKIVRAKPGKISIRRMMQEDALKDFIGGDNKMAEWVVRQHGIPQAIFIDDGYMNLKDLLGKVPKQYLSETSPGVFLAKLPIVVGRKGILEIDKKTQELRLSQEAGSFLINDGQLFVRDTKVTGWSEKANGPALYKSPKEFRPFLLAWGGTETYISNTKMASFGYANSKSYGVSISQYTPNMAKVLKRPEPTGWIIDSEFSDMWYGFYCYETTGFVIKGNTYKDNIVYGIDPHDRSHGLIIADNTVYGTKKKHGIIISREVNDSFIFNNRSYDNKLSGLVLDRNSVNNFVADNEFYRNHTDGITLYESGDNLLWGNKVIANRRHGIRVRNSVNIKLYENTSMANGLTGLYGHIKDLTDTDRDIALDPFDAKVSLIVVGGELAGNGSGPLSIDSPLSVELYRVSMLAPTKSSGISFNGVLGDRQEEILDLLVRQQKAVLIDPVERQTELQD.

The first 30 residues, 1 to 30, serve as a signal peptide directing secretion; the sequence is MGACAMNPQALKGSAMLAAAMLLASGAAMA. PbH1 repeat units lie at residues 229 to 256, 291 to 313, 315 to 338, 340 to 362, 364 to 386, and 387 to 409; these read GTET…SISQ, TTGF…DPHD, SHGL…IISR, VNDS…VLDR, SVNN…TLYE, and SGDN…RVRN. The Proton acceptor role is filled by His312.

It belongs to the D-mannuronate C5-epimerase family.

The protein resides in the periplasm. The catalysed reaction is [(1-&gt;4)-beta-D-mannuronosyl](n) = [alginate](n). It functions in the pathway glycan biosynthesis; alginate biosynthesis. Catalyzes the epimerization of beta-D-mannuronate to alpha-L-guluronate during the synthesis of the linear polysaccharide alginate. In addition, is part of a periplasmic protein complex that protects alginate from degradation by AlgL by channeling the newly formed alginate polymer through a scaffold that transfers the alginate polymer through the periplasmic space to the outer membrane secretin AlgE. This Pseudomonas fluorescens protein is Mannuronan C5-epimerase.